The following is a 419-amino-acid chain: CinA-like protein (419 aa).

The protein belongs to the CinA family.

The chain is CinA-like protein from Acaryochloris marina (strain MBIC 11017).